Here is a 309-residue protein sequence, read N- to C-terminus: Homoserine kinase (309 aa).

91-101 (PIGSGLGSSAC) provides a ligand contact to ATP.

This sequence belongs to the GHMP kinase family. Homoserine kinase subfamily.

It is found in the cytoplasm. The catalysed reaction is L-homoserine + ATP = O-phospho-L-homoserine + ADP + H(+). Its pathway is amino-acid biosynthesis; L-threonine biosynthesis; L-threonine from L-aspartate: step 4/5. Functionally, catalyzes the ATP-dependent phosphorylation of L-homoserine to L-homoserine phosphate. This chain is Homoserine kinase, found in Serratia proteamaculans (strain 568).